A 158-amino-acid polypeptide reads, in one-letter code: uncharacterized protein (158 aa).

The helical transmembrane segment at 33-53 threads the bilayer; it reads VLAAVPQLGAAKVLVLLLLGV.

Its subcellular location is the membrane. This is an uncharacterized protein from Saccharomyces cerevisiae (strain ATCC 204508 / S288c) (Baker's yeast).